Reading from the N-terminus, the 710-residue chain is Fatty acid oxidation complex subunit alpha (710 aa).

The tract at residues 1–190 is enoyl-CoA hydratase; it reads MSMEKTFNLA…KMGLVNDVVP (190 aa). Residues 310-710 form a 3-hydroxyacyl-CoA dehydrogenase region; it reads RKVKKVMVLG…ASDGSQFYKK (401 aa).

This sequence in the N-terminal section; belongs to the enoyl-CoA hydratase/isomerase family. It in the central section; belongs to the 3-hydroxyacyl-CoA dehydrogenase family. As to quaternary structure, heterotetramer of two alpha chains (FadJ) and two beta chains (FadI).

It localises to the cytoplasm. The catalysed reaction is a (3S)-3-hydroxyacyl-CoA = a (2E)-enoyl-CoA + H2O. The enzyme catalyses a 4-saturated-(3S)-3-hydroxyacyl-CoA = a (3E)-enoyl-CoA + H2O. It carries out the reaction a (3S)-3-hydroxyacyl-CoA + NAD(+) = a 3-oxoacyl-CoA + NADH + H(+). It catalyses the reaction (3S)-3-hydroxybutanoyl-CoA = (3R)-3-hydroxybutanoyl-CoA. It functions in the pathway lipid metabolism; fatty acid beta-oxidation. In terms of biological role, catalyzes the formation of a hydroxyacyl-CoA by addition of water on enoyl-CoA. Also exhibits 3-hydroxyacyl-CoA epimerase and 3-hydroxyacyl-CoA dehydrogenase activities. The protein is Fatty acid oxidation complex subunit alpha of Shewanella frigidimarina (strain NCIMB 400).